The chain runs to 679 residues: WD repeat-containing protein 48 homolog (679 aa).

WD repeat units follow at residues 26–65 (QHRNGVNALQLDSNNGKLYSAGRDAIIRVWNTRTEANEKY), 71–110 (HHNDWVNDIVLCCNGRNLISASCDTTVKVWNAHKGFCMST), 113–152 (THRDYVQALAYAKDREQVASAGLDKAIFLWDVNTLTALTA), 164–203 (GSKDSIYSLAMNPSGTVIVSGSTENILRIWDPRTCMRSMK), 206–245 (GHTENVRCLVVSPDGNQVVSGSSDGTIKVWNLGQQRCIQT), 248–287 (VHKEGVWSLLMSENFQYIISGSRDRNIIVTEMRNPSNKML), 290–329 (EEKAPVLSLGYNIDKTGVWATTWNSDIRCWKLPMYDRCVL), and 349–388 (KGGAAIKECTVLNDKRYIITKDSQDQVVVYDVLRVTKKEE). Positions 594 to 615 (PSAGNANNSLQNSQSDANSEGS) are disordered.

The protein belongs to the WD repeat WDR48 family. As to quaternary structure, catalytic component of the Usp12-46 deubiquitylase complex consisting of Usp12-46, Wdr20 and Uaf1; regulatory subunit that, together wtih Wdr20, stabilizes Usp12-46. The Usp12-46 deubiquitylase complex associates with arr/arrow; the interaction leads to deubiquitination and stabilization of arr/arrow.

In terms of biological role, regulatory component of the Usp12-46 deubiquitylase complex. activates deubiquitination by increasing the catalytic turnover without increasing the affinity of deubiquitinating enzymes for the substrate. The complex deubiquitylates the wg/wingless-signaling receptor arr/arrow, which stabilizes the receptor and increases its concentration at the cell surface; this enhances the sensitivity of cells to wg/wingless-signal stimulation. This increases the amplitude and spatial range of the signaling response to the wg/wingless morphogen gradient, facilitating the precise concentration-dependent regulation of its target genes. Together with Wdr20 and Usp12-46 required for wg/wingless-mediated signaling in the wing imaginal disc and for wg/wingless-dependent regulation of intestinal stem cell proliferation. The chain is WD repeat-containing protein 48 homolog from Drosophila mojavensis (Fruit fly).